The sequence spans 261 residues: Mite allergen Der p 3 (261 aa).

A signal peptide spans 1–18 (MIIYNILIVLLLAINTLA). A propeptide spanning residues 19-29 (NPILPASPNAT) is cleaved from the precursor. The Peptidase S1 domain maps to 30–260 (IVGGEKALAG…FIDWIESKRS (231 aa)). Cysteine 54 and cysteine 70 are joined by a disulfide. Residues histidine 69 and aspartate 114 each act as charge relay system in the active site. Disulfide bonds link cysteine 181–cysteine 198 and cysteine 210–cysteine 236. Catalysis depends on serine 214, which acts as the Charge relay system.

It belongs to the peptidase S1 family.

Its subcellular location is the secreted. The sequence is that of Mite allergen Der p 3 (DERP3) from Dermatophagoides pteronyssinus (European house dust mite).